Consider the following 338-residue polypeptide: GTPase Obg (338 aa).

The region spanning 1-159 (MKFIDEVTLF…AKLRLELKLM (159 aa)) is the Obg domain. The 172-residue stretch at 160–331 (ADVGLLGLPN…LLDEIARRLW (172 aa)) folds into the OBG-type G domain. Residues 166–173 (GLPNAGKS), 191–195 (FTTIK), 213–216 (DIPG), 283–286 (TKLD), and 312–314 (SSA) contribute to the GTP site. Mg(2+) contacts are provided by serine 173 and threonine 193.

This sequence belongs to the TRAFAC class OBG-HflX-like GTPase superfamily. OBG GTPase family. As to quaternary structure, monomer. The cofactor is Mg(2+).

The protein resides in the cytoplasm. In terms of biological role, an essential GTPase which binds GTP, GDP and possibly (p)ppGpp with moderate affinity, with high nucleotide exchange rates and a fairly low GTP hydrolysis rate. Plays a role in control of the cell cycle, stress response, ribosome biogenesis and in those bacteria that undergo differentiation, in morphogenesis control. This is GTPase Obg from Pelobacter propionicus (strain DSM 2379 / NBRC 103807 / OttBd1).